The following is a 356-amino-acid chain: Surface presentation of antigens protein SpaS (356 aa).

5 helical membrane-spanning segments follow: residues 29–49 (LIIA…GSFN), 72–92 (LAVF…CLVC), 132–152 (VKDT…AIIC), 179–199 (LLAL…LDAI), and 261–281 (HITI…ISVY).

It belongs to the type III secretion exporter family.

The protein resides in the cell inner membrane. Involved in a secretory pathway responsible for the surface presentation of determinants needed for the entry of Salmonella species into mammalian cells. The sequence is that of Surface presentation of antigens protein SpaS (spaS) from Salmonella typhimurium (strain LT2 / SGSC1412 / ATCC 700720).